The primary structure comprises 597 residues: Arginine--tRNA ligase (597 aa).

The 'HIGH' region motif lies at 124–134 (PNVAKPLHVGH).

The protein belongs to the class-I aminoacyl-tRNA synthetase family. As to quaternary structure, monomer.

It is found in the cytoplasm. It carries out the reaction tRNA(Arg) + L-arginine + ATP = L-arginyl-tRNA(Arg) + AMP + diphosphate. This is Arginine--tRNA ligase from Agathobacter rectalis (strain ATCC 33656 / DSM 3377 / JCM 17463 / KCTC 5835 / VPI 0990) (Eubacterium rectale).